The primary structure comprises 344 residues: UDP-3-O-acylglucosamine N-acyltransferase (344 aa).

Histidine 236 functions as the Proton acceptor in the catalytic mechanism.

Belongs to the transferase hexapeptide repeat family. LpxD subfamily. In terms of assembly, homotrimer.

It catalyses the reaction a UDP-3-O-[(3R)-3-hydroxyacyl]-alpha-D-glucosamine + a (3R)-hydroxyacyl-[ACP] = a UDP-2-N,3-O-bis[(3R)-3-hydroxyacyl]-alpha-D-glucosamine + holo-[ACP] + H(+). It functions in the pathway bacterial outer membrane biogenesis; LPS lipid A biosynthesis. Its function is as follows. Catalyzes the N-acylation of UDP-3-O-acylglucosamine using 3-hydroxyacyl-ACP as the acyl donor. Is involved in the biosynthesis of lipid A, a phosphorylated glycolipid that anchors the lipopolysaccharide to the outer membrane of the cell. The chain is UDP-3-O-acylglucosamine N-acyltransferase from Nitratidesulfovibrio vulgaris (strain ATCC 29579 / DSM 644 / CCUG 34227 / NCIMB 8303 / VKM B-1760 / Hildenborough) (Desulfovibrio vulgaris).